The following is an 815-amino-acid chain: Lon protease 1 (815 aa).

Residues 12-205 (VFVLALRDVV…HILKTIETEI (194 aa)) form the Lon N-terminal domain. 358-365 (GPPGVGKT) is a binding site for ATP. The Lon proteolytic domain maps to 594–775 (TNQIGQVAGL…DEVFKIALES (182 aa)). Catalysis depends on residues serine 681 and lysine 724.

It belongs to the peptidase S16 family. Homohexamer. Organized in a ring with a central cavity.

It localises to the cytoplasm. The enzyme catalyses Hydrolysis of proteins in presence of ATP.. Its function is as follows. ATP-dependent serine protease that mediates the selective degradation of mutant and abnormal proteins as well as certain short-lived regulatory proteins. Required for cellular homeostasis and for survival from DNA damage and developmental changes induced by stress. Degrades polypeptides processively to yield small peptide fragments that are 5 to 10 amino acids long. Binds to DNA in a double-stranded, site-specific manner. The polypeptide is Lon protease 1 (Hydrogenovibrio crunogenus (strain DSM 25203 / XCL-2) (Thiomicrospira crunogena)).